A 557-amino-acid polypeptide reads, in one-letter code: Small ribosomal subunit protein bS1 (557 aa).

4 S1 motif domains span residues 21 to 87 (GSIV…LSRE), 105 to 171 (AETV…VSRR), 192 to 260 (GMEV…LGLK), and 277 to 347 (GTKL…LGLK). Lys-229, Lys-279, and Lys-363 each carry N6-acetyllysine. S1 motif domains follow at residues 364–434 (GDRV…LGVK) and 451–520 (GAIV…LSVR).

Belongs to the bacterial ribosomal protein bS1 family. In terms of assembly, part of the 30S ribosomal subunit. Some nascent polypeptide chains are able to cross-link to this protein in situ. Can be cross-linked to mRNA in the ribosome. Post-translationally, phosphorylated; probably on a serine.

Required for translation of most natural mRNAs except for leaderless mRNA. Binds mRNA upstream of the Shine-Dalgarno (SD) sequence and helps it bind to the 30S ribosomal subunit; acts as an RNA chaperone to unfold structured mRNA on the ribosome but is not essential for mRNAs with strong SDs and little 5'-UTR structure, thus it may help fine-tune which mRNAs that are translated. Unwinds dsRNA by binding to transiently formed ssRNA regions; binds about 10 nucleotides. Has a preference for polypyrimidine tracts. Negatively autoregulates its own translation. In Escherichia coli O157:H7, this protein is Small ribosomal subunit protein bS1 (rpsA).